Here is a 150-residue protein sequence, read N- to C-terminus: Avidin-related protein 2 (150 aa).

An N-terminal signal peptide occupies residues 1–24 (MVHATSPLLLLLLLSLALVAPSLS). One can recognise an Avidin-like domain in the interval 26-147 (RKCSLTGEWD…GNNDFTRQHT (122 aa)). A disulfide bond links Cys28 and Cys105. Positions 36, 40, 57, 59, and 63 each coordinate biotin. Asn67 and Asn93 each carry an N-linked (GlcNAc...) asparagine glycan. Biotin is bound by residues Ser95, Ser99, and Asn140.

In terms of assembly, homotetramer. Glycosylated.

Its subcellular location is the secreted. Functionally, forms a strong non-covalent specific complex with biotin. This Gallus gallus (Chicken) protein is Avidin-related protein 2 (AVR2).